A 161-amino-acid polypeptide reads, in one-letter code: Cyclic pyranopterin monophosphate synthase (161 aa).

Residues 75–77 and 113–114 each bind substrate; these read LCH and ME. Asp128 is a catalytic residue.

It belongs to the MoaC family. In terms of assembly, homohexamer; trimer of dimers.

The catalysed reaction is (8S)-3',8-cyclo-7,8-dihydroguanosine 5'-triphosphate = cyclic pyranopterin phosphate + diphosphate. It participates in cofactor biosynthesis; molybdopterin biosynthesis. In terms of biological role, catalyzes the conversion of (8S)-3',8-cyclo-7,8-dihydroguanosine 5'-triphosphate to cyclic pyranopterin monophosphate (cPMP). The polypeptide is Cyclic pyranopterin monophosphate synthase (Methylobacillus flagellatus (strain ATCC 51484 / DSM 6875 / VKM B-1610 / KT)).